We begin with the raw amino-acid sequence, 436 residues long: DNA-dependent metalloprotease SPRTN (436 aa).

One can recognise a SprT-like domain in the interval 19–186 (IRALFLEFND…RTCGGEFVKI (168 aa)). Residue H85 coordinates Zn(2+). E86 is a catalytic residue. Zn(2+) contacts are provided by H89 and H104. The disordered stretch occupies residues 184 to 219 (VKIKEPENYSQKRKRNNDPTKSELGNSSHVKINKGK). The SHP-box motif lies at 231 to 239 (FSGTGYKLF). A PIP-box motif is present at residues 271–277 (QTDSTFL). The tract at residues 300-321 (GSPIKLPSSSNNKSHQDSSKQK) is disordered. The segment at 408–435 (KVCCPVCGTEIFESKINDHLDTCLQNYN) adopts a UBZ4-type zinc-finger fold. Zn(2+)-binding residues include C411, C414, H426, and C430.

The protein belongs to the Spartan family. As to quaternary structure, homodimer. Requires Zn(2+) as cofactor. Post-translationally, autocatalytically cleaved in response to double-stranded DNA-binding: autocatalytic cleavage takes place in trans and leads to inactivation.

It localises to the nucleus. Its subcellular location is the chromosome. Its activity is regulated as follows. DNA-binding activates the protease activity: single-stranded DNA-binding specifically activates ability to cleave covalent DNA-protein cross-links (DPCs). In contrast, double-stranded DNA-binding specifically activates autocatalytic cleavage, and subsequent inactivation. In terms of biological role, DNA-dependent metalloendopeptidase that mediates the proteolytic cleavage of covalent DNA-protein cross-links (DPCs) during DNA synthesis, thereby playing a key role in maintaining genomic integrity. DPCs are highly toxic DNA lesions that interfere with essential chromatin transactions, such as replication and transcription, and which are induced by reactive agents, such as UV light or formaldehyde. Associates with the DNA replication machinery and specifically removes DPCs during DNA synthesis. Catalyzes proteolytic cleavage of the hmces DNA-protein cross-link following unfolding by the brip1/fancj helicase. Acts as a pleiotropic protease for DNA-binding proteins cross-linked with DNA, such as top1, top2a, histones H3 and H4. Mediates degradation of DPCs that are not ubiquitinated, while it is not able to degrade ubiquitinated DPCs. SPRTN activation requires polymerase collision with DPCs followed by helicase bypass of DPCs. May also act as a 'reader' of ubiquitinated pcna: facilitates chromatin association of rad18 and is required for efficient pcna monoubiquitination, promoting a feed-forward loop to enhance pcna ubiquitination and translesion DNA synthesis. Acts as a regulator of translesion DNA synthesis by recruiting vcp/p97 to sites of DNA damage. In Xenopus tropicalis (Western clawed frog), this protein is DNA-dependent metalloprotease SPRTN.